The primary structure comprises 115 residues: DNA-binding protein PH1060 (115 aa).

Belongs to the PDCD5 family.

The sequence is that of DNA-binding protein PH1060 from Pyrococcus horikoshii (strain ATCC 700860 / DSM 12428 / JCM 9974 / NBRC 100139 / OT-3).